Here is a 321-residue protein sequence, read N- to C-terminus: Phospho-N-acetylmuramoyl-pentapeptide-transferase (321 aa).

The next 10 membrane-spanning stretches (helical) occupy residues M4 to P24, T51 to F71, S75 to I95, Q109 to I129, G139 to V159, G173 to G193, S195 to F215, M222 to L242, L247 to V267, and V297 to M317.

It belongs to the glycosyltransferase 4 family. MraY subfamily. Mg(2+) is required as a cofactor.

Its subcellular location is the cell membrane. The catalysed reaction is UDP-N-acetyl-alpha-D-muramoyl-L-alanyl-gamma-D-glutamyl-meso-2,6-diaminopimeloyl-D-alanyl-D-alanine + di-trans,octa-cis-undecaprenyl phosphate = di-trans,octa-cis-undecaprenyl diphospho-N-acetyl-alpha-D-muramoyl-L-alanyl-D-glutamyl-meso-2,6-diaminopimeloyl-D-alanyl-D-alanine + UMP. The protein operates within cell wall biogenesis; peptidoglycan biosynthesis. Its function is as follows. Catalyzes the initial step of the lipid cycle reactions in the biosynthesis of the cell wall peptidoglycan: transfers peptidoglycan precursor phospho-MurNAc-pentapeptide from UDP-MurNAc-pentapeptide onto the lipid carrier undecaprenyl phosphate, yielding undecaprenyl-pyrophosphoryl-MurNAc-pentapeptide, known as lipid I. This Heliobacterium modesticaldum (strain ATCC 51547 / Ice1) protein is Phospho-N-acetylmuramoyl-pentapeptide-transferase.